The chain runs to 454 residues: Isthmin-1 (454 aa).

The signal sequence occupies residues 1-29 (MVRLAAELLLLLGLLLLTLHITVLRGSGA). Disordered regions lie at residues 29–93 (ASDR…PRSF), 125–144 (PDSE…WSLP), and 161–209 (TNSG…STDG). The span at 38–55 (GNNNLNLESDSTSETSFP) shows a compositional bias: polar residues. Residues 128-137 (EAEKDQHPEN) are compositionally biased toward basic and acidic residues. Residues 208–252 (DGEGDWSLWSVCSVTCGNGNQKRTRSCGYACIATESRTCDRPNCP) form the TSP type-1 domain. 3 disulfide bridges follow: Cys219-Cys246, Cys223-Cys251, and Cys234-Cys238. The AMOP domain maps to 279-442 (LFEVDMDSCE…QKCTESPSDE (164 aa)).

It belongs to the isthmin family. As to quaternary structure, interacts with integrin ITGAV/ITGB5.

The protein resides in the secreted. In terms of biological role, acts as an angiogenesis inhibitor. This chain is Isthmin-1 (Ism1), found in Mus musculus (Mouse).